The following is a 208-amino-acid chain: Imidazoleglycerol-phosphate dehydratase (208 aa).

The protein belongs to the imidazoleglycerol-phosphate dehydratase family.

The protein resides in the cytoplasm. It carries out the reaction D-erythro-1-(imidazol-4-yl)glycerol 3-phosphate = 3-(imidazol-4-yl)-2-oxopropyl phosphate + H2O. It participates in amino-acid biosynthesis; L-histidine biosynthesis; L-histidine from 5-phospho-alpha-D-ribose 1-diphosphate: step 6/9. In Pseudarthrobacter chlorophenolicus (strain ATCC 700700 / DSM 12829 / CIP 107037 / JCM 12360 / KCTC 9906 / NCIMB 13794 / A6) (Arthrobacter chlorophenolicus), this protein is Imidazoleglycerol-phosphate dehydratase.